The chain runs to 465 residues: UDP-N-acetylmuramate--L-alanine ligase (465 aa).

115-121 (GAHGKTT) contacts ATP.

This sequence belongs to the MurCDEF family.

The protein resides in the cytoplasm. It catalyses the reaction UDP-N-acetyl-alpha-D-muramate + L-alanine + ATP = UDP-N-acetyl-alpha-D-muramoyl-L-alanine + ADP + phosphate + H(+). The protein operates within cell wall biogenesis; peptidoglycan biosynthesis. Cell wall formation. This chain is UDP-N-acetylmuramate--L-alanine ligase, found in Coxiella burnetii (strain CbuG_Q212) (Coxiella burnetii (strain Q212)).